Here is a 173-residue protein sequence, read N- to C-terminus: Archaemetzincin (173 aa).

H130 serves as a coordination point for Zn(2+). The active-site Proton acceptor is E131. Residues H134, H140, C141, C146, C165, and C168 each contribute to the Zn(2+) site.

It belongs to the peptidase M54 family. As to quaternary structure, monomer. It depends on Zn(2+) as a cofactor.

Functionally, probable zinc metalloprotease whose natural substrate is unknown. In Halobacterium salinarum (strain ATCC 29341 / DSM 671 / R1), this protein is Archaemetzincin.